The following is a 364-amino-acid chain: 3-dehydroquinate synthase (364 aa).

Residues Asp73–Lys78, Gly107–Asp111, Thr131–Thr132, Lys144, Lys153, and Cys171–Thr174 contribute to the NAD(+) site. The Zn(2+) site is built by Glu186, His249, and His266.

It belongs to the sugar phosphate cyclases superfamily. Dehydroquinate synthase family. The cofactor is NAD(+). Co(2+) is required as a cofactor. Zn(2+) serves as cofactor.

The protein localises to the cytoplasm. The catalysed reaction is 7-phospho-2-dehydro-3-deoxy-D-arabino-heptonate = 3-dehydroquinate + phosphate. It functions in the pathway metabolic intermediate biosynthesis; chorismate biosynthesis; chorismate from D-erythrose 4-phosphate and phosphoenolpyruvate: step 2/7. Its function is as follows. Catalyzes the conversion of 3-deoxy-D-arabino-heptulosonate 7-phosphate (DAHP) to dehydroquinate (DHQ). This chain is 3-dehydroquinate synthase, found in Blochmanniella floridana.